Consider the following 649-residue polypeptide: tRNA-guanine(15) transglycosylase (649 aa).

Catalysis depends on Asp88, which acts as the Nucleophile. 2 residues coordinate substrate: Asp123 and Ala194. Zn(2+) contacts are provided by Cys280, Cys282, and Cys285. The region spanning 573-648 is the PUA domain; the sequence is KYRIVIDSSV…VAVTLRGGLK (76 aa).

The protein belongs to the archaeosine tRNA-ribosyltransferase family. Zn(2+) serves as cofactor.

It carries out the reaction guanosine(15) in tRNA + 7-cyano-7-deazaguanine = 7-cyano-7-carbaguanosine(15) in tRNA + guanine. It functions in the pathway tRNA modification; archaeosine-tRNA biosynthesis. In terms of biological role, exchanges the guanine residue with 7-cyano-7-deazaguanine (preQ0) at position 15 in the dihydrouridine loop (D-loop) of archaeal tRNAs. In Methanococcus maripaludis (strain C7 / ATCC BAA-1331), this protein is tRNA-guanine(15) transglycosylase.